Consider the following 195-residue polypeptide: Peptidyl-tRNA hydrolase (195 aa).

Position 18 (Y18) interacts with tRNA. H23 functions as the Proton acceptor in the catalytic mechanism. TRNA contacts are provided by F69, N71, and N117.

This sequence belongs to the PTH family. In terms of assembly, monomer.

The protein localises to the cytoplasm. The enzyme catalyses an N-acyl-L-alpha-aminoacyl-tRNA + H2O = an N-acyl-L-amino acid + a tRNA + H(+). In terms of biological role, hydrolyzes ribosome-free peptidyl-tRNAs (with 1 or more amino acids incorporated), which drop off the ribosome during protein synthesis, or as a result of ribosome stalling. Its function is as follows. Catalyzes the release of premature peptidyl moieties from peptidyl-tRNA molecules trapped in stalled 50S ribosomal subunits, and thus maintains levels of free tRNAs and 50S ribosomes. This is Peptidyl-tRNA hydrolase from Hahella chejuensis (strain KCTC 2396).